The chain runs to 63 residues: Chymotrypsin/elastase isoinhibitor 1 (63 aa).

Intrachain disulfides connect Cys5–Cys38, Cys14–Cys33, Cys17–Cys29, Cys21–Cys60, and Cys40–Cys54. The TIL domain occupies 5-60; that stretch reads CGPNEVWTECTGCEMKCGPDENTPCPLMCRRPSCECSPGRGMRRTNDGKCIPASQC.

It belongs to the serine protease inhibitor-like (TIL domain-containing) family.

Its subcellular location is the secreted. Defends the organism against the host's proteinases. This is Chymotrypsin/elastase isoinhibitor 1 from Ascaris suum (Pig roundworm).